A 514-amino-acid chain; its full sequence is MARPRSLVSPLLSGVFCQCDTVSGAPHSHETPASPSLAAAALAADPCGGLLCGGPEHERRLQILFQELDVNKDGAICINDLAVGLKRLGVHRTELELRKIVKAGDKDQDGQLDFDEFVHYLRDHEKKLRLVFKSLDKKNDGRIDAQEIMQSLRDLGVNISEQQAEKILKSMDKNGTMTIDWNEWRDYHLLHSAENIPEIILYWKHSTIFDVGENLLVPDEFTVEEKQTGMWWRHLVAGGGAGAVSRTCTAPLDRLKVLMQVHASRSNNMSILGGFTHMIREGGFRSLWRGNGINVIKIAPESAIKFMAYEQIKRIIGSNQETLGIHERFVAGSLAGVIAQSSIYPMEVLKTRMALRKTGQYQGVLDCGKKILLQEGLSAFYKGYVPNMLGIIPYAGIDLAVYETLKNAWLQRYATSSADPGVFVLLACGTVSSTCGQLASYPLALVRTRMQAEASVEGAPQMTMSKLFKHIVKTEGAFGLYRGLAPNFMKVIPAVSISYVVYENLKLTLGVQSR.

Residues 1–234 lie on the Mitochondrial intermembrane side of the membrane; that stretch reads MARPRSLVSP…EKQTGMWWRH (234 aa). 4 consecutive EF-hand domains span residues 56-91, 92-122, 123-158, and 159-194; these read EHERRLQILFQELDVNKDGAICINDLAVGLKRLGVH, RTELELRKIVKAGDKDQDGQLDFDEFVHYLR, DHEKKLRLVFKSLDKKNDGRIDAQEIMQSLRDLGVN, and ISEQQAEKILKSMDKNGTMTIDWNEWRDYHLLHSAE. Positions 69, 71, 73, 80, 105, 107, 109, 111, and 116 each coordinate Ca(2+). Solcar repeat units follow at residues 229-315, 323-408, and 420-508; these read GMWW…IKRI, LGIH…LKNA, and PGVF…LKLT. Residues 235–252 traverse the membrane as a helical segment; the sequence is LVAGGGAGAVSRTCTAPL. The Mitochondrial matrix portion of the chain corresponds to 253-289; the sequence is DRLKVLMQVHASRSNNMSILGGFTHMIREGGFRSLWR. Residues 290–309 form a helical membrane-spanning segment; that stretch reads GNGINVIKIAPESAIKFMAY. The Mitochondrial intermembrane portion of the chain corresponds to 310–332; sequence EQIKRIIGSNQETLGIHERFVAG. The helical transmembrane segment at 333-346 threads the bilayer; the sequence is SLAGVIAQSSIYPM. At 347–382 the chain is on the mitochondrial matrix side; that stretch reads EVLKTRMALRKTGQYQGVLDCGKKILLQEGLSAFYK. The chain crosses the membrane as a helical span at residues 383–402; sequence GYVPNMLGIIPYAGIDLAVY. Over 403 to 425 the chain is Mitochondrial intermembrane; sequence ETLKNAWLQRYATSSADPGVFVL. Residues 426–443 traverse the membrane as a helical segment; it reads LACGTVSSTCGQLASYPL. Topologically, residues 444–482 are mitochondrial matrix; that stretch reads ALVRTRMQAEASVEGAPQMTMSKLFKHIVKTEGAFGLYR. A helical transmembrane segment spans residues 483 to 502; it reads GLAPNFMKVIPAVSISYVVY. Over 503–514 the chain is Mitochondrial intermembrane; sequence ENLKLTLGVQSR.

It belongs to the mitochondrial carrier (TC 2.A.29) family.

The protein localises to the mitochondrion inner membrane. In terms of biological role, calcium-dependent mitochondrial solute carrier. The chain is Calcium-binding mitochondrial carrier protein SCaMC-2 (slc25a25) from Xenopus laevis (African clawed frog).